Here is a 1205-residue protein sequence, read N- to C-terminus: cGMP-specific 3',5'-cyclic phosphodiesterase (1205 aa).

The disordered stretch occupies residues M1–Q153. The segment covering T18 to S32 has biased composition (low complexity). A compositionally biased stretch (polar residues) spans K33 to A48. Over residues G62–G71 the composition is skewed to low complexity. Over residues S83–S94 the composition is skewed to polar residues. The segment covering S118–Q140 has biased composition (low complexity). GAF domains follow at residues D259–I411 and N443–I624. Positions S654–V1052 constitute a PDEase domain. The active-site Proton donor is the H730. Residues H734, H770, D771, and D956 each contribute to the a divalent metal cation site. Disordered stretches follow at residues Q1093–L1122 and S1152–L1205. Basic and acidic residues-rich tracts occupy residues G1098–R1109 and S1152–S1162. Over residues A1171–M1191 the composition is skewed to low complexity. A compositionally biased stretch (basic residues) spans S1195 to L1205. Residue C1202 is modified to Cysteine methyl ester. C1202 is lipidated: S-farnesyl cysteine. A propeptide spans A1203–L1205 (removed in mature form).

The protein belongs to the cyclic nucleotide phosphodiesterase family. In terms of assembly, interacts with PrBP. A divalent metal cation serves as cofactor.

The protein localises to the cell membrane. The catalysed reaction is 3',5'-cyclic GMP + H2O = GMP + H(+). In terms of biological role, has a role regulating cGMP transport in Malpighian tubule principal cells. The polypeptide is cGMP-specific 3',5'-cyclic phosphodiesterase (Drosophila sechellia (Fruit fly)).